Reading from the N-terminus, the 186-residue chain is Adenylyl-sulfate kinase (186 aa).

Position 17-24 (17-24 (GLSGAGKT)) interacts with ATP. Catalysis depends on Ser91, which acts as the Phosphoserine intermediate.

The protein belongs to the APS kinase family.

It catalyses the reaction adenosine 5'-phosphosulfate + ATP = 3'-phosphoadenylyl sulfate + ADP + H(+). It functions in the pathway sulfur metabolism; hydrogen sulfide biosynthesis; sulfite from sulfate: step 2/3. Catalyzes the synthesis of activated sulfate. In Chloroflexus aurantiacus (strain ATCC 29364 / DSM 637 / Y-400-fl), this protein is Adenylyl-sulfate kinase.